A 204-amino-acid polypeptide reads, in one-letter code: Tat proofreading chaperone DmsD (204 aa).

Belongs to the TorD/DmsD family. DmsD subfamily.

In terms of biological role, required for biogenesis/assembly of DMSO reductase, but not for the interaction of the DmsA signal peptide with the Tat system. May be part of a chaperone cascade complex that facilitates a folding-maturation pathway for the substrate protein. This is Tat proofreading chaperone DmsD from Escherichia coli O6:H1 (strain CFT073 / ATCC 700928 / UPEC).